A 79-amino-acid polypeptide reads, in one-letter code: Conotoxin Vi6.9 (79 aa).

The N-terminal stretch at methionine 1 to alanine 22 is a signal peptide. Positions aspartate 23–arginine 47 are excised as a propeptide. Cystine bridges form between cysteine 49-cysteine 62, cysteine 56-cysteine 67, and cysteine 61-cysteine 77. Residues proline 60 and proline 63 each carry the 4-hydroxyproline modification.

Belongs to the conotoxin O1 superfamily. As to expression, expressed by the venom duct.

The protein localises to the secreted. Its function is as follows. Ion channel inhibitor that inhibits the increase in intracellular calcium upon depolarization in DRG neurons. In vivo, both intraperitoneal and intracranial injections into mice induce hyperactivity. In Conus virgo (Virgin cone), this protein is Conotoxin Vi6.9.